A 236-amino-acid chain; its full sequence is MATPHINAELGDFAETVLMPGDPLRAKFIAENFLEDVKQVCDVRSMLGFTGTYKGKRVSVMGHGMGIPSCSIYVHELIKDFGVKNIIRVGSCGAVHDDVKLMDIIIGMGASTDSKVNRIRFNDHDFAAIADFHLLETSVQQARLQNVNVRVGNIFSADLFYSPEEGLFDKMEKLGMLGIDMEAAGIYGVAAELGAKALTILTVSDHIKRGEKLSSEDRQKSFGEMMNVALETAVNI.

A purine D-ribonucleoside is bound at residue His5. Residues Gly21, Arg25, Arg44, and 88 to 91 (RVGS) each bind phosphate. Residues 180 to 182 (DME) and 204 to 205 (SD) contribute to the a purine D-ribonucleoside site. Catalysis depends on Asp205, which acts as the Proton donor.

The protein belongs to the PNP/UDP phosphorylase family. As to quaternary structure, homohexamer; trimer of homodimers.

The catalysed reaction is a purine D-ribonucleoside + phosphate = a purine nucleobase + alpha-D-ribose 1-phosphate. It catalyses the reaction a purine 2'-deoxy-D-ribonucleoside + phosphate = a purine nucleobase + 2-deoxy-alpha-D-ribose 1-phosphate. Its function is as follows. Catalyzes the reversible phosphorolytic breakdown of the N-glycosidic bond in the beta-(deoxy)ribonucleoside molecules, with the formation of the corresponding free purine bases and pentose-1-phosphate. The polypeptide is Purine nucleoside phosphorylase DeoD-type 2 (Photobacterium profundum (strain SS9)).